The following is a 197-amino-acid chain: NADH-quinone oxidoreductase subunit C (197 aa).

The protein belongs to the complex I 30 kDa subunit family. NDH-1 is composed of 14 different subunits. Subunits NuoB, C, D, E, F, and G constitute the peripheral sector of the complex.

It localises to the cell inner membrane. The catalysed reaction is a quinone + NADH + 5 H(+)(in) = a quinol + NAD(+) + 4 H(+)(out). Its function is as follows. NDH-1 shuttles electrons from NADH, via FMN and iron-sulfur (Fe-S) centers, to quinones in the respiratory chain. The immediate electron acceptor for the enzyme in this species is believed to be ubiquinone. Couples the redox reaction to proton translocation (for every two electrons transferred, four hydrogen ions are translocated across the cytoplasmic membrane), and thus conserves the redox energy in a proton gradient. This Neisseria meningitidis serogroup B (strain ATCC BAA-335 / MC58) protein is NADH-quinone oxidoreductase subunit C.